A 178-amino-acid polypeptide reads, in one-letter code: Plasmid transfer protein TraF (178 aa).

The first 30 residues, 1–30 (MSRILKRIAAGVVIAGVAALLLAAGGYAAG), serve as a signal peptide directing secretion.

Belongs to the peptidase S26C family.

Its subcellular location is the periplasm. Its function is as follows. Required for donor-specific phage sensitivity. May be involved in pilus assembly. The polypeptide is Plasmid transfer protein TraF (traF) (Escherichia coli).